An 814-amino-acid polypeptide reads, in one-letter code: Protein fam-161 (814 aa).

Residues I71–H87 are compositionally biased toward polar residues. 4 disordered regions span residues I71 to Q130, R150 to A255, S569 to T610, and M714 to A814. Residues M99–E111 are compositionally biased toward basic and acidic residues. A compositionally biased stretch (low complexity) spans S174 to S193. 2 stretches are compositionally biased toward polar residues: residues G194–H207 and R216–N235. Positions P236–T249 are enriched in basic residues. Composition is skewed to polar residues over residues R570 to E583 and E594 to T610. The stretch at S606–N689 forms a coiled coil. Residues M714–S727 show a composition bias toward basic and acidic residues. Positions Q728 to G745 are enriched in polar residues. Over residues K751–K765 the composition is skewed to basic and acidic residues. Low complexity-rich tracts occupy residues S766–E779 and S795–A814.

Belongs to the FAM161 family. In terms of tissue distribution, expressed in amphid and phasmid ciliated neurons.

The protein localises to the cell projection. The protein resides in the cilium. It localises to the cytoplasm. Its subcellular location is the cytoskeleton. It is found in the cilium axoneme. This Caenorhabditis elegans protein is Protein fam-161.